A 210-amino-acid polypeptide reads, in one-letter code: Small ribosomal subunit protein uS5 (210 aa).

Residues 1–23 (MARTPSSDRPERGRGGERGDRPN) are compositionally biased toward basic and acidic residues. A disordered region spans residues 1 to 40 (MARTPSSDRPERGRGGERGDRPNRGRGGAEQTPREREESE). Residues 41 to 104 (FVDKLVHINR…EQAKRNMIKI (64 aa)) enclose the S5 DRBM domain.

It belongs to the universal ribosomal protein uS5 family. In terms of assembly, part of the 30S ribosomal subunit. Contacts proteins S4 and S8.

With S4 and S12 plays an important role in translational accuracy. Functionally, located at the back of the 30S subunit body where it stabilizes the conformation of the head with respect to the body. This chain is Small ribosomal subunit protein uS5, found in Paramagnetospirillum magneticum (strain ATCC 700264 / AMB-1) (Magnetospirillum magneticum).